A 135-amino-acid polypeptide reads, in one-letter code: uncharacterized protein (135 aa).

3 helical membrane-spanning segments follow: residues 13 to 35, 82 to 101, and 108 to 130; these read AKVI…AMYL, VAVF…LLSI, and IYRI…PLIL.

It localises to the cell membrane. This is an uncharacterized protein from Archaeoglobus fulgidus (strain ATCC 49558 / DSM 4304 / JCM 9628 / NBRC 100126 / VC-16).